The following is a 64-amino-acid chain: Large ribosomal subunit protein bL35 (64 aa).

It belongs to the bacterial ribosomal protein bL35 family.

The sequence is that of Large ribosomal subunit protein bL35 from Chloroherpeton thalassium (strain ATCC 35110 / GB-78).